A 122-amino-acid chain; its full sequence is Large ribosomal subunit protein uL14 (122 aa).

This sequence belongs to the universal ribosomal protein uL14 family. As to quaternary structure, part of the 50S ribosomal subunit. Forms a cluster with proteins L3 and L19. In the 70S ribosome, L14 and L19 interact and together make contacts with the 16S rRNA in bridges B5 and B8.

Functionally, binds to 23S rRNA. Forms part of two intersubunit bridges in the 70S ribosome. The sequence is that of Large ribosomal subunit protein uL14 from Stutzerimonas stutzeri (strain A1501) (Pseudomonas stutzeri).